We begin with the raw amino-acid sequence, 252 residues long: Phosphate import ATP-binding protein PstB (252 aa).

One can recognise an ABC transporter domain in the interval 5–247; it reads LIASDVNIFY…PRDERTEAYV (243 aa). 37–44 is an ATP binding site; the sequence is GPSGCGKT.

The protein belongs to the ABC transporter superfamily. Phosphate importer (TC 3.A.1.7) family. In terms of assembly, the complex is composed of two ATP-binding proteins (PstB), two transmembrane proteins (PstC and PstA) and a solute-binding protein (PstS).

The protein localises to the cell membrane. The enzyme catalyses phosphate(out) + ATP + H2O = ADP + 2 phosphate(in) + H(+). Functionally, part of the ABC transporter complex PstSACB involved in phosphate import. Responsible for energy coupling to the transport system. This Deinococcus geothermalis (strain DSM 11300 / CIP 105573 / AG-3a) protein is Phosphate import ATP-binding protein PstB.